Here is a 187-residue protein sequence, read N- to C-terminus: Ethylene-responsive transcription factor ERF015 (187 aa).

Positions 26-83 (CYRGVRKRSWGKWVSEIRVPKTGRRIWLGSYDAPEKAARAYDAALFCIRGEKGVYNFP) form a DNA-binding region, AP2/ERF.

It belongs to the AP2/ERF transcription factor family. ERF subfamily.

It localises to the nucleus. Functionally, probably acts as a transcriptional activator. Binds to the GCC-box pathogenesis-related promoter element. May be involved in the regulation of gene expression by stress factors and by components of stress signal transduction pathways. This chain is Ethylene-responsive transcription factor ERF015 (ERF015), found in Arabidopsis thaliana (Mouse-ear cress).